We begin with the raw amino-acid sequence, 112 residues long: Small capsomere-interacting protein (112 aa).

It belongs to the herpesviridae small capsomere-interacting protein family. As to quaternary structure, interacts with the major capsid protein/MCP.

The protein resides in the virion. Its subcellular location is the host nucleus. Its function is as follows. Participates in the assembly of the infectious particles by decorating the outer surface of the capsid shell and thus forming a layer between the capsid and the tegument. Complexes composed of the major capsid protein and small capsomere-interacting protein/SCP assemble together in the host cytoplasm and are translocated to the nucleus, where they accumulate and participate in capsid assembly. The sequence is that of Small capsomere-interacting protein from Homo sapiens (Human).